Reading from the N-terminus, the 722-residue chain is Golgin subfamily A member 5 (722 aa).

The Cytoplasmic segment spans residues 1–689 (MSWFTDLAGR…IFLRRYPIAR (689 aa)). 2 disordered regions span residues 90 to 158 (TRSS…VKPI) and 194 to 215 (TLSD…SHEL). The span at 91–109 (RSSIESSHNSSVNVSSHRS) shows a compositional bias: low complexity. A compositionally biased stretch (basic and acidic residues) spans 134–148 (DKVHSSSQKETRKES). Positions 149–158 (ASVNQAVKPI) are enriched in polar residues. A compositionally biased stretch (low complexity) spans 195–209 (LSDSGSSASLSTTGD). Residues 211–622 (KSHELSNLRL…LEHQLKNVQG (412 aa)) adopt a coiled-coil conformation. The chain crosses the membrane as a helical; Anchor for type IV membrane protein span at residues 690–710 (VFIIIYMALLHLWVMIVLLTY). The Lumenal segment spans residues 711–722 (TPEMHHDTPSGK).

Its subcellular location is the golgi apparatus membrane. Its function is as follows. Involved in maintaining Golgi structure. Stimulates the formation of Golgi stacks and ribbons. Involved in intra-Golgi retrograde transport. The chain is Golgin subfamily A member 5 (golga5) from Xenopus laevis (African clawed frog).